Here is a 281-residue protein sequence, read N- to C-terminus: Ribosomal protein L11 methyltransferase (281 aa).

Thr-131, Gly-152, Asp-174, and Asn-217 together coordinate S-adenosyl-L-methionine.

Belongs to the methyltransferase superfamily. PrmA family.

The protein localises to the cytoplasm. The enzyme catalyses L-lysyl-[protein] + 3 S-adenosyl-L-methionine = N(6),N(6),N(6)-trimethyl-L-lysyl-[protein] + 3 S-adenosyl-L-homocysteine + 3 H(+). Its function is as follows. Methylates ribosomal protein L11. This is Ribosomal protein L11 methyltransferase from Phocaeicola vulgatus (strain ATCC 8482 / DSM 1447 / JCM 5826 / CCUG 4940 / NBRC 14291 / NCTC 11154) (Bacteroides vulgatus).